Consider the following 505-residue polypeptide: Catalase (505 aa).

Positions 1 to 25 (MSQQDKKLTGVFGHPVSDRENSMTA) are disordered. Residues His56 and Asn129 contribute to the active site. A heme-binding site is contributed by Tyr339.

The protein belongs to the catalase family. As to quaternary structure, homodimer. It depends on heme as a cofactor.

It catalyses the reaction 2 H2O2 = O2 + 2 H2O. Functionally, decomposes hydrogen peroxide into water and oxygen; serves to protect cells from the toxic effects of hydrogen peroxide. The polypeptide is Catalase (katA) (Staphylococcus aureus (strain MSSA476)).